The sequence spans 414 residues: 2,3-bisphosphoglycerate-independent phosphoglycerate mutase (414 aa).

It belongs to the BPG-independent phosphoglycerate mutase family. A-PGAM subfamily.

The catalysed reaction is (2R)-2-phosphoglycerate = (2R)-3-phosphoglycerate. Its pathway is carbohydrate degradation; glycolysis; pyruvate from D-glyceraldehyde 3-phosphate: step 3/5. Its function is as follows. Catalyzes the interconversion of 2-phosphoglycerate and 3-phosphoglycerate. The polypeptide is 2,3-bisphosphoglycerate-independent phosphoglycerate mutase (Saccharolobus solfataricus (strain ATCC 35092 / DSM 1617 / JCM 11322 / P2) (Sulfolobus solfataricus)).